The primary structure comprises 31 residues: Photosystem II reaction center protein T (31 aa).

A helical transmembrane segment spans residues 3 to 23; it reads AIVYTFLLVGTLGIIFFAIFF.

This sequence belongs to the PsbT family. As to quaternary structure, PSII is composed of 1 copy each of membrane proteins PsbA, PsbB, PsbC, PsbD, PsbE, PsbF, PsbH, PsbI, PsbJ, PsbK, PsbL, PsbM, PsbT, PsbY, PsbZ, Psb30/Ycf12, at least 3 peripheral proteins of the oxygen-evolving complex and a large number of cofactors. It forms dimeric complexes.

Its subcellular location is the plastid. The protein resides in the chloroplast thylakoid membrane. Functionally, found at the monomer-monomer interface of the photosystem II (PS II) dimer, plays a role in assembly and dimerization of PSII. PSII is a light-driven water plastoquinone oxidoreductase, using light energy to abstract electrons from H(2)O, generating a proton gradient subsequently used for ATP formation. The protein is Photosystem II reaction center protein T of Ostreococcus tauri.